We begin with the raw amino-acid sequence, 120 residues long: NAD(P)H-quinone oxidoreductase subunit 3, chloroplastic (120 aa).

The next 3 helical transmembrane spans lie at 14–34 (LIIS…LAPI), 64–84 (MFAL…PWAM), and 88–108 (VLGV…IVGS).

It belongs to the complex I subunit 3 family. In terms of assembly, NDH is composed of at least 16 different subunits, 5 of which are encoded in the nucleus.

The protein localises to the plastid. Its subcellular location is the chloroplast thylakoid membrane. The catalysed reaction is a plastoquinone + NADH + (n+1) H(+)(in) = a plastoquinol + NAD(+) + n H(+)(out). The enzyme catalyses a plastoquinone + NADPH + (n+1) H(+)(in) = a plastoquinol + NADP(+) + n H(+)(out). Functionally, NDH shuttles electrons from NAD(P)H:plastoquinone, via FMN and iron-sulfur (Fe-S) centers, to quinones in the photosynthetic chain and possibly in a chloroplast respiratory chain. The immediate electron acceptor for the enzyme in this species is believed to be plastoquinone. Couples the redox reaction to proton translocation, and thus conserves the redox energy in a proton gradient. The protein is NAD(P)H-quinone oxidoreductase subunit 3, chloroplastic of Cicer arietinum (Chickpea).